The following is a 354-amino-acid chain: Arginase (354 aa).

Mn(2+)-binding residues include histidine 136, aspartate 159, histidine 161, and aspartate 163. Residues asparagine 165, serine 172, and aspartate 217 each contribute to the L-arginine site. Residues aspartate 266 and aspartate 268 each contribute to the Mn(2+) site.

This sequence belongs to the arginase family. In terms of assembly, homotrimer; oligomerization is dependent on Mn(2+) binding. Mn(2+) serves as cofactor.

The enzyme catalyses L-arginine + H2O = urea + L-ornithine. It participates in nitrogen metabolism; urea cycle; L-ornithine and urea from L-arginine: step 1/1. Functionally, catalyzes the hydrolysis of L-arginine into urea and L-ornithine, which is a precursor for polyamine biosynthesis. May play a role in parasite intra-hepatic development during the host liver stage. In Plasmodium berghei (strain Anka), this protein is Arginase.